Reading from the N-terminus, the 207-residue chain is LexA repressor (207 aa).

The segment at residues V29–A49 is a DNA-binding region (H-T-H motif). Catalysis depends on for autocatalytic cleavage activity residues S128 and K166.

Belongs to the peptidase S24 family. As to quaternary structure, homodimer.

It carries out the reaction Hydrolysis of Ala-|-Gly bond in repressor LexA.. In terms of biological role, represses a number of genes involved in the response to DNA damage (SOS response), including recA and lexA. In the presence of single-stranded DNA, RecA interacts with LexA causing an autocatalytic cleavage which disrupts the DNA-binding part of LexA, leading to derepression of the SOS regulon and eventually DNA repair. The polypeptide is LexA repressor (Lactobacillus johnsonii (strain CNCM I-12250 / La1 / NCC 533)).